A 287-amino-acid polypeptide reads, in one-letter code: ATP synthase gamma chain (287 aa).

The protein belongs to the ATPase gamma chain family. As to quaternary structure, F-type ATPases have 2 components, CF(1) - the catalytic core - and CF(0) - the membrane proton channel. CF(1) has five subunits: alpha(3), beta(3), gamma(1), delta(1), epsilon(1). CF(0) has three main subunits: a, b and c.

The protein localises to the cell inner membrane. Functionally, produces ATP from ADP in the presence of a proton gradient across the membrane. The gamma chain is believed to be important in regulating ATPase activity and the flow of protons through the CF(0) complex. This chain is ATP synthase gamma chain, found in Klebsiella pneumoniae subsp. pneumoniae (strain ATCC 700721 / MGH 78578).